The primary structure comprises 463 residues: uncharacterized protein (463 aa).

One can recognise a TRAM domain in the interval 9 to 67; the sequence is VLKKGQRFPLTIKRLGINGEGVGYFKRHVVFVPGALPGEEVVVEVTDVKPRFAEASIRK. [4Fe-4S] cluster contacts are provided by Cys80, Cys86, Cys89, and Cys169. Positions 293, 322, 343, and 391 each coordinate S-adenosyl-L-methionine. Catalysis depends on Cys418, which acts as the Nucleophile.

It belongs to the class I-like SAM-binding methyltransferase superfamily. RNA M5U methyltransferase family.

This is an uncharacterized protein from Halalkalibacterium halodurans (strain ATCC BAA-125 / DSM 18197 / FERM 7344 / JCM 9153 / C-125) (Bacillus halodurans).